A 119-amino-acid polypeptide reads, in one-letter code: Centrocin 1 (119 aa).

An N-terminal signal peptide occupies residues 1–20 (MMIKIAVVLCAVMATTMVRA). Positions 21 to 50 (KYVEEQELADLLDLLISEEVSSPDDAVALQ) are excised as a propeptide. 2 positions are modified to 6'-bromotryptophan: W52 and W53. A disulfide bridge links C75 with C110. Residues 81-104 (SPQEARAKVLEAFPEMKEADLDEE) constitute a propeptide that is removed on maturation. N117 bears the Asparagine amide mark.

As to quaternary structure, heterodimer of a light and a heavy chain, probably disulfide-linked.

Functionally, has antimicrobial activity against Gram-negative bacteria, Gram-positive bacteria and against fungi with minimum inhibitory concentration (MIC) between 0.78 uM and 50 uM. Shows little hemolytic activity even at a concentration of 100 uM. In terms of biological role, has no antimicrobial activity. Shows no hemolytic activity. This is Centrocin 1 from Echinus esculentus (Sea urchin).